We begin with the raw amino-acid sequence, 282 residues long: MNLIDGKQIAAKVKGEVATEVRALAARGVQTGLTVVRVGDDPASAIYVRGKRKDCEEVGITSVEHHLPVTTTQAELLALIARLNADPAVHGILVQLPLPKHVDERAVLDAISPAKDADGFHPFNVGALSIGIAGVPRPCTPAGVMRMLDEARVDPKGKRALVVGRSNIVGKPMAMMLLERHATVTIAHSRTADLAGEVGRADILVAAIGKAELVKGAWVKEGAVVIDVGMNRLADGKLVGDVEFAAAAARASAITPVPGGVGPMTRAMLLVNTVELAKRVAR.

Residues 164–166 (GRS) and S189 contribute to the NADP(+) site.

The protein belongs to the tetrahydrofolate dehydrogenase/cyclohydrolase family. In terms of assembly, homodimer.

The enzyme catalyses (6R)-5,10-methylene-5,6,7,8-tetrahydrofolate + NADP(+) = (6R)-5,10-methenyltetrahydrofolate + NADPH. It carries out the reaction (6R)-5,10-methenyltetrahydrofolate + H2O = (6R)-10-formyltetrahydrofolate + H(+). It participates in one-carbon metabolism; tetrahydrofolate interconversion. In terms of biological role, catalyzes the oxidation of 5,10-methylenetetrahydrofolate to 5,10-methenyltetrahydrofolate and then the hydrolysis of 5,10-methenyltetrahydrofolate to 10-formyltetrahydrofolate. The polypeptide is Bifunctional protein FolD (Anaeromyxobacter dehalogenans (strain 2CP-C)).